We begin with the raw amino-acid sequence, 171 residues long: Protein E6 (171 aa).

The segment at 1 to 28 (MATTDSSTDSADEGPSPKSSYCDTTETK) is disordered. Positions 17-28 (PKSSYCDTTETK) are enriched in polar residues. Zinc fingers lie at residues 58-94 (CNFCGNFLTHLEVCEFDQKKLSLIWKGHCVFACCRVC) and 131-167 (CYTCMRFLDSIEKLDICGRKLPFHKVRGSWKGICRLC).

The protein belongs to the papillomaviridae E6 protein family. As to quaternary structure, forms homodimers. Interacts with ubiquitin-protein ligase UBE3A/E6-AP; this interaction stimulates UBE3A ubiquitin activity. Interacts with host BAK1.

It localises to the host cytoplasm. The protein resides in the host nucleus. Its function is as follows. Plays a major role in the induction and maintenance of cellular transformation. E6 associates with host UBE3A/E6-AP ubiquitin-protein ligase and modulates its activity. Protects host keratinocytes from apoptosis by mediating the degradation of host BAK1. May also inhibit host immune response. This Human papillomavirus 14 protein is Protein E6.